We begin with the raw amino-acid sequence, 412 residues long: Multidrug resistance protein MdtG (412 aa).

Transmembrane regions (helical) follow at residues 19–39 (LGCF…PLYV), 56–76 (LVFS…GGLA), 90–110 (LGMS…QFLL), 113–133 (ALLG…ATQI), 144–164 (TLST…GFLA), 171–191 (TVFF…LFLI), 222–242 (LFVT…ILTL), 254–274 (IAFI…MSAP), 288–308 (ILIV…FVQT), 317–337 (FLLG…LVYN), and 376–396 (AVFL…TLSL).

Belongs to the major facilitator superfamily. DHA1 family. MdtG (TC 2.A.1.2.20) subfamily.

It localises to the cell inner membrane. The protein is Multidrug resistance protein MdtG of Klebsiella pneumoniae (strain 342).